The sequence spans 609 residues: MVTMENSDEIMQILERFTDLKQKEIPKELEEYLQYVAKTGDTIFKWSSLKYLFREKLLSVIKHFNEDSPRLEEIPNYPNVDPFNYETMKSSLLERLDLFNAAPFTVQRLCELLIDPRKQYSRIDKFMRALEKNILVVSTIDPGRKRTESENGDSLDSVVNGDLSMEVNIDIEMENNNGNADEGSSPGAGSAGCAQKASCPRSDDNDQPKAKKAKLEIDGEERSEASDETDTEVATRVKNEKDEKNDNDETDSPHEAAEIEEPDEEVDEADQETKTTKQPAYGSQKEGEQEESFPSSADDEAEDPMVSKSIEAEKELVAQEKKREEDKKVAIEPKEEIVKKEEVVESDKPDGKVAQLGDKAVVKKSTPPADGENQEPVKVKAENEKEEKKHAPIKTEKQDDIDSTETDDAPSAEKPAEEKIASSESKPKTKSEDDPEAETKKSQPEKTETEAAEKSVSDEKQAAEPNAESENRNDLTTSKATEAAQESVEKSPVEDASSPAVEDLAAATTPQSPLGAADSAAETPPAETGDDSQASPLVAAVTPPVLALNDQPMEDTPAEEEARVSPSATVEEVVMAESANAGAMATEEAAKDDPAAMEIDDTSQEVMMQ.

Serine 68 is subject to Phosphoserine. The segment at 175–569 (NNNGNADEGS…EEARVSPSAT (395 aa)) is disordered. The span at 183-194 (GSSPGAGSAGCA) shows a compositional bias: low complexity. Positions 201 to 225 (RSDDNDQPKAKKAKLEIDGEERSEA) are enriched in basic and acidic residues. Residues serine 223 and serine 226 each carry the phosphoserine modification. Basic and acidic residues predominate over residues 233-244 (VATRVKNEKDEK). The residue at position 252 (serine 252) is a Phosphoserine. Acidic residues predominate over residues 258–270 (EIEEPDEEVDEAD). 2 stretches are compositionally biased toward basic and acidic residues: residues 310-351 (IEAE…KPDG) and 375-400 (EPVK…KQDD). Over residues 401-410 (IDSTETDDAP) the composition is skewed to acidic residues. The span at 414 to 462 (KPAEEKIASSESKPKTKSEDDPEAETKKSQPEKTETEAAEKSVSDEKQA) shows a compositional bias: basic and acidic residues. The residue at position 602 (threonine 602) is a Phosphothreonine. Residue serine 603 is modified to Phosphoserine.

The protein belongs to the PPP4R2 family. Serine/threonine-protein phosphatase 4 (PP4) occurs in different assemblies of the catalytic and one or more regulatory subunits. Probably part of a PP4 PPP4C-PPP4R2-PPP4R3 complex containing Pp4-19C, PPP4R2r and flfl.

Functionally, regulatory subunit of serine/threonine-protein phosphatase 4 (PP4). The probable PP4 complex Pp4-19C-PPP4R2r-flfl (PPP4C-PPP4R2-PPP4R3) is required to prevent caspase induced cell death (in vitro). This Drosophila melanogaster (Fruit fly) protein is Serine/threonine-protein phosphatase 4 regulatory subunit 2 (PPP4R2r).